Here is a 695-residue protein sequence, read N- to C-terminus: Polyribonucleotide nucleotidyltransferase (695 aa).

Asp486 and Asp492 together coordinate Mg(2+). One can recognise a KH domain in the interval 553-612 (PRIETMQINTSKIATVIGPGGKQIRQIIERSGAQVDINDDGVINIAASTQESINKAKELI). Residues 622–690 (GKVYNGRVTS…EKGQLKLSHK (69 aa)) form the S1 motif domain.

It belongs to the polyribonucleotide nucleotidyltransferase family. Mg(2+) is required as a cofactor.

The protein resides in the cytoplasm. The enzyme catalyses RNA(n+1) + phosphate = RNA(n) + a ribonucleoside 5'-diphosphate. Involved in mRNA degradation. Catalyzes the phosphorolysis of single-stranded polyribonucleotides processively in the 3'- to 5'-direction. The chain is Polyribonucleotide nucleotidyltransferase from Chlamydia trachomatis serovar A (strain ATCC VR-571B / DSM 19440 / HAR-13).